The primary structure comprises 320 residues: Serpentine receptor class delta-40 (320 aa).

Transmembrane regions (helical) follow at residues 12 to 32 (IFYP…IYLI), 42 to 62 (MLKV…VVSC), 95 to 115 (YQVL…TFVF), 133 to 153 (IILL…IMVI), 189 to 209 (LINF…SFFF), 243 to 263 (AFLP…CILT), and 273 to 293 (FMTV…LYFV).

It belongs to the nematode receptor-like protein srd family.

The protein localises to the membrane. The sequence is that of Serpentine receptor class delta-40 (srd-40) from Caenorhabditis elegans.